Reading from the N-terminus, the 860-residue chain is Ras GTPase-activating-like protein gapA (860 aa).

Acidic residues predominate over residues 1–20 (MEGLEIEDEDVILLDEDDDS). The tract at residues 1-48 (MEGLEIEDEDVILLDEDDDSSSSSTVNNSSSNIKNNGNTNNNIGNDDS) is disordered. Residues 21–46 (SSSSTVNNSSSNIKNNGNTNNNIGND) show a composition bias toward low complexity. A coiled-coil region spans residues 146-185 (AEIQELKRNMVAEIRRNHLLERDVNKLDKRIALLIKHRSN). Residues 269–515 (FLILSLFRLA…SIVRQYLEDL (247 aa)) enclose the Ras-GAP domain. Residues 663–732 (NNPQLSSNAE…TIALRDLRKH (70 aa)) adopt a coiled-coil conformation.

As to quaternary structure, heterotetramer. Quaternary complex with activated rac1A, ctxA and ctxB in the absence of rgaA.

In terms of biological role, part of signaling pathway that is required for completion of cytokinesis. gapA and rgaA control cortexillin localization to the cleavage furrow and hence may be involved in cleavage of the midbody in the final stage of cytokinesis by regulating the actin cytoskeleton. Forms a complex by linking activated rac1A to ctxA in the absence of rgaA. Assembly of this complex is necessary for the recruitment of cortexillin to the midzone of the dividing cell. This chain is Ras GTPase-activating-like protein gapA (gapA), found in Dictyostelium discoideum (Social amoeba).